The primary structure comprises 463 residues: MSTSSTPPQGAWSGRFSEPVSEIVKRYTASIPFDYRLAEFDIQGSLAHAAMLHHVGVLSADDLAAIRGGMGELLEEIRAGRFAWSLDKEDVHLNIEAALTAKIGDAGKRLHTGRSRNDQVATDIRLYLRDAIDRILAGLKACQTSLVDLAEAHADTVMPGFTHLQVAQPVTFGHHLLAYFEMLARDAERMADCRRRVNRLPLGAAALAGTSYPIDRAYVARELGFEAVCENSLDAVSDRDFAIEFAAAAALVMTHLSRLSEELILWMSPRFGFIDLADRFCTGSSIMPQKKNPDVPELVRGKTGRVNGHLVALLTLMKGQPLAYNKDNQEDKEPLFDTVDTLADTLAIYADMLRGVTVKPDAMHAAVMQGFATATDLADYLVKKGLPFRDAHEVVARAVRVADESGRDLADLPLDELQTFSPIIGDDVYALLTLEGSLAARDHFGGTAPAQVRAAVARARGRL.

This sequence belongs to the lyase 1 family. Argininosuccinate lyase subfamily.

It localises to the cytoplasm. The enzyme catalyses 2-(N(omega)-L-arginino)succinate = fumarate + L-arginine. It participates in amino-acid biosynthesis; L-arginine biosynthesis; L-arginine from L-ornithine and carbamoyl phosphate: step 3/3. The polypeptide is Argininosuccinate lyase (Thiobacillus denitrificans (strain ATCC 25259 / T1)).